Consider the following 239-residue polypeptide: MANISSIHILFLVFITSGIAVMATDFTLRNNCPTTVWAGTLAGQGPKLGDGGFELTPGASRQLTAPAGWSGRFWARTGCNFDASGNGRCVTGDCGGLRCNGGGVPPVTLAEFTLVGDGGKDFYDVSLVDGYNVKLGIRPSGGSGDCKYAGCVSDLNAACPDMLKVMDQNNVVACKSACERFNTDQYCCRGANDKPETCPPTDYSRIFKNACPDAYSYAYDDETSTFTCTGANYEITFCP.

A signal peptide spans 1 to 23 (MANISSIHILFLVFITSGIAVMA). Intrachain disulfides connect cysteine 32–cysteine 238, cysteine 79–cysteine 89, cysteine 94–cysteine 99, cysteine 146–cysteine 228, cysteine 151–cysteine 211, cysteine 159–cysteine 174, cysteine 178–cysteine 187, and cysteine 188–cysteine 198.

Belongs to the thaumatin family.

It localises to the secreted. The protein resides in the extracellular space. It is found in the apoplast. In terms of biological role, partially responsible for acquired pathogen resistance. The polypeptide is Pathogenesis-related protein 5 (Arabidopsis thaliana (Mouse-ear cress)).